Reading from the N-terminus, the 753-residue chain is 5-methyltetrahydropteroyltriglutamate--homocysteine methyltransferase (753 aa).

5-methyltetrahydropteroyltri-L-glutamate is bound by residues 17–20 (RELK) and K117. L-homocysteine is bound by residues 431–433 (IGS) and E484. L-methionine-binding positions include 431–433 (IGS) and E484. Residues 515-516 (RC) and W561 each bind 5-methyltetrahydropteroyltri-L-glutamate. L-homocysteine is bound at residue D599. Position 599 (D599) interacts with L-methionine. E605 contributes to the 5-methyltetrahydropteroyltri-L-glutamate binding site. Zn(2+) is bound by residues H641, C643, and E665. The active-site Proton donor is H694. C726 is a Zn(2+) binding site.

The protein belongs to the vitamin-B12 independent methionine synthase family. In terms of assembly, monomer. Requires Zn(2+) as cofactor.

It catalyses the reaction 5-methyltetrahydropteroyltri-L-glutamate + L-homocysteine = tetrahydropteroyltri-L-glutamate + L-methionine. It functions in the pathway amino-acid biosynthesis; L-methionine biosynthesis via de novo pathway; L-methionine from L-homocysteine (MetE route): step 1/1. Its function is as follows. Catalyzes the transfer of a methyl group from 5-methyltetrahydrofolate to homocysteine resulting in methionine formation. This chain is 5-methyltetrahydropteroyltriglutamate--homocysteine methyltransferase, found in Escherichia coli (strain K12).